Reading from the N-terminus, the 820-residue chain is Breast cancer anti-estrogen resistance protein 3 homolog (820 aa).

Ala-2 carries the post-translational modification N-acetylalanine. Residues Ser-32, Ser-72, Ser-77, Ser-176, and Ser-284 each carry the phosphoserine modification. The tract at residues 40-81 (DAYQDVSIHGTLPRKKKGPPSIRSCDNAGHSKSPRQSSPLTQ) is disordered. The 100-residue stretch at 148-247 (WYHGRIPRQV…QSGAIIFQPI (100 aa)) folds into the SH2 domain. Lys-329 bears the N6-methyllysine mark. Residues 346 to 367 (QSPSMDTSPCPSSPVFRTGSEP) are disordered. 3 positions are modified to phosphoserine: Ser-353, Ser-358, and Ser-370. Arg-437 carries the post-translational modification Omega-N-methylarginine. Phosphoserine is present on Ser-466. The region spanning 543–813 (DARVIAQHML…TALSRKLEPP (271 aa)) is the Ras-GEF domain. The tract at residues 739–743 (LATAR) is mediates the interaction with BCAR1/p130CAS.

In terms of assembly, part of a complex comprised of PTPRA, BCAR1, BCAR3 (via SH2 domain) and SRC; the formation of the complex is dependent on integrin mediated-tyrosine phosphorylation of PTPRA. Within the complex, interacts (via SH2 domain) with PTPRA (when phosphorylated on 'Tyr-825'). Interacts (via Ras-GEF domain) with BCAR1. Interacts (via Ras-GEF domain) with NEDD9. Interacts with PTK2B/FAK1. Interacts with PTPN1. Interacts (via SH2 domain) with EGFR (when tyrosine-phosphorylated). In terms of processing, phosphorylated on tyrosine residues. In terms of tissue distribution, abundantly expressed in the lung and brain, with lower expression in splenic lymphocytes and liver (at protein level). Expressed in splenic lymphocytes (at protein level). Expressed in the lymph node cortical region, periphery of the splenic white pulp and in alveolar lung fibroblasts. Expressed in epithelial cells in the lens equatorial region and early stage nucleated cortical lens fiber cells. Expressed in the thymus. Expressed in B-cells.

It localises to the cytoplasm. It is found in the cell junction. Its subcellular location is the focal adhesion. Acts as an adapter protein downstream of several growth factor receptors to promote cell proliferation, migration, and redistribution of actin fibers. Specifically involved in INS/insulin signaling pathway by mediating MAPK1/ERK2-MAPK3/ERK1 activation and DNA synthesis. Promotes insulin-mediated membrane ruffling. In response to vasoconstrictor peptide EDN1, involved in the activation of RAP1 downstream of PTK2B via interaction with phosphorylated BCAR1. Inhibits cell migration and invasion via regulation of TGFB-mediated matrix digestion, actin filament rearrangement, and inhibition of invadopodia activity. May inhibit TGFB-SMAD signaling, via facilitating BCAR1 and SMAD2 and/or SMAD3 interaction. Regulates EGF-induced DNA synthesis. Required for the maintenance of ocular lens morphology and structural integrity, potentially via regulation of focal adhesion complex signaling. Acts upstream of PTPRA to regulate the localization of BCAR1 and PTPRA to focal adhesions, via regulation of SRC-mediated phosphorylation of PTPRA. Positively regulates integrin-induced tyrosine phosphorylation of BCAR1. Acts as a guanine nucleotide exchange factor (GEF) for small GTPases RALA, RAP1A and RRAS. However, in a contrasting study, lacks GEF activity towards RAP1. This chain is Breast cancer anti-estrogen resistance protein 3 homolog (Bcar3), found in Mus musculus (Mouse).